We begin with the raw amino-acid sequence, 389 residues long: Chalcone synthase 4 (389 aa).

C164 is an active-site residue.

It belongs to the thiolase-like superfamily. Chalcone/stilbene synthases family.

The enzyme catalyses (E)-4-coumaroyl-CoA + 3 malonyl-CoA + 3 H(+) = 2',4,4',6'-tetrahydroxychalcone + 3 CO2 + 4 CoA. The protein operates within secondary metabolite biosynthesis; flavonoid biosynthesis. Functionally, the primary product of this enzyme is 4,2',4',6'-tetrahydroxychalcone (also termed naringenin-chalcone or chalcone) which can under specific conditions spontaneously isomerize into naringenin. The chain is Chalcone synthase 4 (CHS4) from Pisum sativum (Garden pea).